Reading from the N-terminus, the 1222-residue chain is MESRGCAALWVLLLAQVSEQQTPACALGLAAAASGSPEDPQPPPFSGSSWLETGEYDLVSAYEVDHRGDYVSHDIMHYQRRRRRRAVTQPGGDALHLRLKGPRHDLHLDLKAASNLMAPGFMVQTLGKGGTKSVQMFPPEENCFYQGSLRSQGNSSVALSTCQGLLGMIRTKDTDYFLKPLPPHLTSKLNRSAQGDSPSHVLYKRSTERQAPRENEVLMITRKRDLARPHLHHDNFHLGPSQKQHFCGRRKKYMPQPPNDDLYILPDEYKPSSRHKRSLLKSHRNEELNVETLVVVDRKMMQSHGHENITTYVLTILNMVSALFKDGTIGGNINIVIVGLILLEDEQPGLAISHHADHTLTSFCQWQSGLMGKDGTRHDHAILLTGLDICSWKNEPCDTLGFAPISGMCSKYRSCTVNEDSGLGLAFTIAHESGHNFGMVHDGEGNMCKKSEGNIMSPTLAGRNGVFSWSSCSRQYLHKFLSTAQAICLADQPKPVKEYKYPEKLPGQLYDANTQCKWQFGEKAKLCMLDFRKDICKALWCHRIGRKCETKFMPAAEGTLCGQDMWCRGGQCVKYGDEGPKPTHGHWSDWSPWSPCSRTCGGGISHRDRLCTNPRPSHGGKFCQGSTRTLKLCNSQRCPLDSVDFRAAQCAEYNSKRFRGWLYKWKPYTQLEDQDLCKLYCIAEGFDFFFSLSNKVKDGTPCSEDSRNVCIDGMCERVGCDNVLGSDATEDSCGVCKGNNSDCVTHRGLYSKHHSTNQYYHMVTIPSGARSIHIYETNISTSYISVRNSLKRYYLNGHWSVDWPGRYKFSGATFNYKRSYKEPENLTSPGPTNETLIVELLFQGRNPGVAWEFSLPRSGAKKTPAAQPSYSWAIVRSECSVSCGGGKMNSKAGCYRDLKVPVNASFCNPKTRPVTGLVPCKVSPCPSSWSVGNWSVCSRTCGGGTQSRPVRCTRRAHYRDESIPASLCPQPEPPIHQACNSQSCPPAWSTGPWAECSRTCGKGWRKRTVACKSTNPSARAQLLHDTACTSEPKPRTHEICLLKRCHKHKKLQWLVSAWSQCSVTCQGGTQQRVLRCAEKYISGKYRELASKKCLHLPKPDLELERACGLIPCPKHPPFDASGSPRGSWFASPWSQCTASCGGGVQRRTVQCLLRGQPASDCFLHEKPETSSACNTHFCPIAEKRGTFCKDLFHWCYLVPQHGMCGHRFYSKQCCNTCSKSNL.

Residues 1–20 form the signal peptide; it reads MESRGCAALWVLLLAQVSEQ. The propeptide occupies 21 to 277; the sequence is QTPACALGLA…EYKPSSRHKR (257 aa). N-linked (GlcNAc...) asparagine glycosylation is found at Asn154 and Asn190. The Cysteine switch signature appears at 245-253; it reads HFCGRRKKY. Residue Cys247 participates in Zn(2+) binding. The Peptidase M12B domain maps to 288–493; that stretch reads LNVETLVVVD…AQAICLADQP (206 aa). The N-linked (GlcNAc...) asparagine glycan is linked to Asn308. Intrachain disulfides connect Cys364-Cys415, Cys390-Cys397, Cys409-Cys488, Cys448-Cys472, Cys516-Cys541, Cys527-Cys548, Cys536-Cys567, Cys561-Cys572, Cys596-Cys633, Cys600-Cys638, and Cys611-Cys623. His431 contacts Zn(2+). Residue Glu432 is part of the active site. Zn(2+)-binding residues include His435 and His441. A Disintegrin domain is found at 494–583; that stretch reads KPVKEYKYPE…KYGDEGPKPT (90 aa). The TSP type-1 1 domain maps to 584 to 639; that stretch reads HGHWSDWSPWSPCSRTCGGGISHRDRLCTNPRPSHGGKFCQGSTRTLKLCNSQRCP. Asn739, Asn778, Asn825, Asn833, Asn903, and Asn933 each carry an N-linked (GlcNAc...) asparagine glycan. Residues 745-871 are spacer; it reads THRGLYSKHH…KTPAAQPSYS (127 aa). 5 consecutive TSP type-1 domains span residues 872–920, 925–985, 986–1046, 1049–1113, and 1125–1179; these read WAIV…LVPC, CPSS…QSCP, PAWS…KRCH, KKLQ…IPCP, and RGSW…HFCP. One can recognise a PLAC domain in the interval 1184–1221; that stretch reads RGTFCKDLFHWCYLVPQHGMCGHRFYSKQCCNTCSKSN.

It depends on Zn(2+) as a cofactor. In terms of processing, the precursor is cleaved by a furin endopeptidase. Glycosylated. Can be O-fucosylated by POFUT2 on a serine or a threonine residue found within the consensus sequence C1-X(2)-(S/T)-C2-G of the TSP type-1 repeat domains where C1 and C2 are the first and second cysteine residue of the repeat, respectively. Fucosylated repeats can then be further glycosylated by the addition of a beta-1,3-glucose residue by the glucosyltransferase, B3GALTL. Fucosylation mediates the efficient secretion of ADAMTS family members. Can also be C-glycosylated with one or two mannose molecules on tryptophan residues within the consensus sequence W-X-X-W of the TPRs, and N-glycosylated. These other glycosylations can also facilitate secretion.

The protein localises to the secreted. The protein resides in the extracellular space. Its subcellular location is the extracellular matrix. The sequence is that of A disintegrin and metalloproteinase with thrombospondin motifs 16 (Adamts16) from Mus musculus (Mouse).